The primary structure comprises 89 residues: Small ribosomal subunit protein uS17 (89 aa).

It belongs to the universal ribosomal protein uS17 family. As to quaternary structure, part of the 30S ribosomal subunit.

Its function is as follows. One of the primary rRNA binding proteins, it binds specifically to the 5'-end of 16S ribosomal RNA. This chain is Small ribosomal subunit protein uS17, found in Chlorobium chlorochromatii (strain CaD3).